Reading from the N-terminus, the 414-residue chain is Probable protein phosphatase 2C 80 (414 aa).

The region spanning 174–411 is the PPM-type phosphatase domain; that stretch reads SCYLPHPEKE…DDITAVVSYV (238 aa). Positions 204, 205, 336, and 402 each coordinate Mn(2+).

It belongs to the PP2C family. It depends on Mg(2+) as a cofactor. Mn(2+) serves as cofactor.

The enzyme catalyses O-phospho-L-seryl-[protein] + H2O = L-seryl-[protein] + phosphate. It catalyses the reaction O-phospho-L-threonyl-[protein] + H2O = L-threonyl-[protein] + phosphate. In Arabidopsis thaliana (Mouse-ear cress), this protein is Probable protein phosphatase 2C 80.